Reading from the N-terminus, the 149-residue chain is MKVILKSDIANVGRQGEIKEVSAGFARNYLIPQSLVMEANDLNLKIWKRERGILEKHREEIINSAREIAFKMEASKFTAKVKIGENGKIFGSITTATLVKIFEDNGFKVNKRDIILSDNIKEIGDHEISVRFHPEVVAKIKLSVINEKE.

The protein belongs to the bacterial ribosomal protein bL9 family.

Binds to the 23S rRNA. This is Large ribosomal subunit protein bL9 from Endomicrobium trichonymphae.